A 322-amino-acid polypeptide reads, in one-letter code: tRNA (guanine-N(7)-)-methyltransferase (322 aa).

3 residues coordinate S-adenosyl-L-methionine: Glu29, Glu55, and Asp105. The active site involves Asp105. Residues Lys109 and Asp141 each coordinate substrate.

It belongs to the class I-like SAM-binding methyltransferase superfamily. TrmB family.

It carries out the reaction guanosine(46) in tRNA + S-adenosyl-L-methionine = N(7)-methylguanosine(46) in tRNA + S-adenosyl-L-homocysteine. It functions in the pathway tRNA modification; N(7)-methylguanine-tRNA biosynthesis. Its function is as follows. Catalyzes the formation of N(7)-methylguanine at position 46 (m7G46) in tRNA. This chain is tRNA (guanine-N(7)-)-methyltransferase, found in Deinococcus radiodurans (strain ATCC 13939 / DSM 20539 / JCM 16871 / CCUG 27074 / LMG 4051 / NBRC 15346 / NCIMB 9279 / VKM B-1422 / R1).